The sequence spans 418 residues: Aspartate aminotransferase, cytoplasmic (418 aa).

S2 is subject to N-acetylserine. L-aspartate is bound by residues G38, W135, and N188. Residue K255 is modified to N6-(pyridoxal phosphate)lysine. R387 provides a ligand contact to L-aspartate. The residue at position 389 (S389) is a Phosphoserine.

It belongs to the class-I pyridoxal-phosphate-dependent aminotransferase family. In terms of assembly, homodimer. Pyridoxal 5'-phosphate is required as a cofactor.

The protein resides in the cytoplasm. It localises to the peroxisome. The catalysed reaction is L-aspartate + 2-oxoglutarate = oxaloacetate + L-glutamate. In terms of biological role, plays a key role in amino acid metabolism. The chain is Aspartate aminotransferase, cytoplasmic (AAT2) from Saccharomyces cerevisiae (strain ATCC 204508 / S288c) (Baker's yeast).